The primary structure comprises 807 residues: Probable phosphoketolase (807 aa).

The protein belongs to the XFP family. Thiamine diphosphate is required as a cofactor.

The sequence is that of Probable phosphoketolase from Mesorhizobium japonicum (strain LMG 29417 / CECT 9101 / MAFF 303099) (Mesorhizobium loti (strain MAFF 303099)).